The primary structure comprises 434 residues: Trigger factor (434 aa).

The PPIase FKBP-type domain maps to Glu161–Pro246.

This sequence belongs to the FKBP-type PPIase family. Tig subfamily.

It localises to the cytoplasm. The catalysed reaction is [protein]-peptidylproline (omega=180) = [protein]-peptidylproline (omega=0). Involved in protein export. Acts as a chaperone by maintaining the newly synthesized protein in an open conformation. Functions as a peptidyl-prolyl cis-trans isomerase. The chain is Trigger factor from Yersinia pseudotuberculosis serotype O:1b (strain IP 31758).